Consider the following 249-residue polypeptide: Putative TrmH family tRNA/rRNA methyltransferase YacO (249 aa).

Positions 198, 218, and 227 each coordinate S-adenosyl-L-methionine.

Belongs to the class IV-like SAM-binding methyltransferase superfamily. RNA methyltransferase TrmH family.

The polypeptide is Putative TrmH family tRNA/rRNA methyltransferase YacO (yacO) (Bacillus subtilis (strain 168)).